The sequence spans 591 residues: Aspartate--tRNA ligase (591 aa).

L-aspartate is bound at residue glutamate 171. An aspartate region spans residues 195–198; it reads QLFK. Residue arginine 217 participates in L-aspartate binding. Residues 217-219 and glutamine 226 contribute to the ATP site; that span reads RDE. L-aspartate is bound at residue histidine 448. Glutamate 482 provides a ligand contact to ATP. Arginine 489 contacts L-aspartate. ATP is bound at residue 534-537; that stretch reads GLDR.

The protein belongs to the class-II aminoacyl-tRNA synthetase family. Type 1 subfamily. As to quaternary structure, homodimer.

Its subcellular location is the cytoplasm. The enzyme catalyses tRNA(Asp) + L-aspartate + ATP = L-aspartyl-tRNA(Asp) + AMP + diphosphate. Functionally, catalyzes the attachment of L-aspartate to tRNA(Asp) in a two-step reaction: L-aspartate is first activated by ATP to form Asp-AMP and then transferred to the acceptor end of tRNA(Asp). The polypeptide is Aspartate--tRNA ligase (Aliivibrio fischeri (strain MJ11) (Vibrio fischeri)).